The primary structure comprises 97 residues: Co-chaperonin GroES (97 aa).

Belongs to the GroES chaperonin family. Heptamer of 7 subunits arranged in a ring. Interacts with the chaperonin GroEL.

The protein resides in the cytoplasm. In terms of biological role, together with the chaperonin GroEL, plays an essential role in assisting protein folding. The GroEL-GroES system forms a nano-cage that allows encapsulation of the non-native substrate proteins and provides a physical environment optimized to promote and accelerate protein folding. GroES binds to the apical surface of the GroEL ring, thereby capping the opening of the GroEL channel. The protein is Co-chaperonin GroES of Buchnera aphidicola subsp. Tuberolachnus salignus.